The chain runs to 428 residues: 3-phosphoshikimate 1-carboxyvinyltransferase (428 aa).

3 residues coordinate 3-phosphoshikimate: Lys23, Ser24, and Arg28. Phosphoenolpyruvate is bound at residue Lys23. Positions 97 and 125 each coordinate phosphoenolpyruvate. 7 residues coordinate 3-phosphoshikimate: Ser170, Ser171, Gln172, Ser198, Asp314, Asn338, and Lys342. A phosphoenolpyruvate-binding site is contributed by Gln172. The active-site Proton acceptor is the Asp314. 3 residues coordinate phosphoenolpyruvate: Arg346, Arg388, and Lys413.

This sequence belongs to the EPSP synthase family. As to quaternary structure, monomer.

The protein localises to the cytoplasm. It carries out the reaction 3-phosphoshikimate + phosphoenolpyruvate = 5-O-(1-carboxyvinyl)-3-phosphoshikimate + phosphate. Its pathway is metabolic intermediate biosynthesis; chorismate biosynthesis; chorismate from D-erythrose 4-phosphate and phosphoenolpyruvate: step 6/7. Functionally, catalyzes the transfer of the enolpyruvyl moiety of phosphoenolpyruvate (PEP) to the 5-hydroxyl of shikimate-3-phosphate (S3P) to produce enolpyruvyl shikimate-3-phosphate and inorganic phosphate. This is 3-phosphoshikimate 1-carboxyvinyltransferase from Baumannia cicadellinicola subsp. Homalodisca coagulata.